A 263-amino-acid polypeptide reads, in one-letter code: GTP cyclohydrolase FolE2 (263 aa).

This sequence belongs to the GTP cyclohydrolase IV family.

The catalysed reaction is GTP + H2O = 7,8-dihydroneopterin 3'-triphosphate + formate + H(+). Its pathway is cofactor biosynthesis; 7,8-dihydroneopterin triphosphate biosynthesis; 7,8-dihydroneopterin triphosphate from GTP: step 1/1. Its function is as follows. Converts GTP to 7,8-dihydroneopterin triphosphate. This is GTP cyclohydrolase FolE2 from Nitrosospira multiformis (strain ATCC 25196 / NCIMB 11849 / C 71).